Here is a 74-residue protein sequence, read N- to C-terminus: Sec-independent protein translocase protein TatA (74 aa).

A helical transmembrane segment spans residues 1-21; that stretch reads MGSFSIWHWLIVLLIVVLVFG.

The protein belongs to the TatA/E family. The Tat system comprises two distinct complexes: a TatABC complex, containing multiple copies of TatA, TatB and TatC subunits, and a separate TatA complex, containing only TatA subunits. Substrates initially bind to the TatABC complex, which probably triggers association of the separate TatA complex to form the active translocon.

The protein resides in the cell inner membrane. Its function is as follows. Part of the twin-arginine translocation (Tat) system that transports large folded proteins containing a characteristic twin-arginine motif in their signal peptide across membranes. TatA could form the protein-conducting channel of the Tat system. This chain is Sec-independent protein translocase protein TatA, found in Nitrosospira multiformis (strain ATCC 25196 / NCIMB 11849 / C 71).